Reading from the N-terminus, the 186-residue chain is Ribosome-recycling factor (186 aa).

This sequence belongs to the RRF family.

The protein localises to the cytoplasm. Responsible for the release of ribosomes from messenger RNA at the termination of protein biosynthesis. May increase the efficiency of translation by recycling ribosomes from one round of translation to another. The protein is Ribosome-recycling factor of Ralstonia pickettii (strain 12J).